We begin with the raw amino-acid sequence, 239 residues long: Norbelladine 4'-O-methyltransferase (239 aa).

S-adenosyl-L-methionine contacts are provided by residues V55, E77, 79–80, S85, D103, and A132; that span reads GV. Residue D155 participates in a divalent metal cation binding. D157 lines the S-adenosyl-L-methionine pocket. 2 residues coordinate a divalent metal cation: D181 and N182.

It belongs to the class I-like SAM-binding methyltransferase superfamily. Cation-dependent O-methyltransferase family. The cofactor is Mg(2+). In terms of tissue distribution, highly expressed in bulbs. Detected in leaves and inflorescences.

It catalyses the reaction norbelladine + S-adenosyl-L-methionine = 4'-O-methylnorbelladine + S-adenosyl-L-homocysteine + H(+). Its pathway is alkaloid biosynthesis. Functionally, 4'-O-methyltransferase converting norbelladine to 4'-O-methylnorbelladine. 4'-O-methylnorbelladine is a precursor to all Amaryllidaceae alkaloids such as galanthamine, lycorine and haemanthamine, and including haemanthamine- and crinamine-type alkaloids, promising anticancer agents. Can use norbelladine, N-methylnorbelladine and dopamine as substrate, but not caffeic acid, vanillin, 3,4-dihydroxybenzaldehyde and tyramine. The sequence is that of Norbelladine 4'-O-methyltransferase from Narcissus aff. pseudonarcissus MK-2014 (Daffodil).